The following is a 30-amino-acid chain: Dermonecrotic toxin LlSicTox-alphaIII-1 (30 aa).

Residue histidine 12 is part of the active site.

This sequence belongs to the arthropod phospholipase D family. Class I subfamily. The cofactor is Mg(2+). In terms of processing, contains 1 disulfide bond. Expressed by the venom gland.

The protein resides in the secreted. It catalyses the reaction an N-(acyl)-sphingosylphosphocholine = an N-(acyl)-sphingosyl-1,3-cyclic phosphate + choline. The enzyme catalyses an N-(acyl)-sphingosylphosphoethanolamine = an N-(acyl)-sphingosyl-1,3-cyclic phosphate + ethanolamine. It carries out the reaction a 1-acyl-sn-glycero-3-phosphocholine = a 1-acyl-sn-glycero-2,3-cyclic phosphate + choline. The catalysed reaction is a 1-acyl-sn-glycero-3-phosphoethanolamine = a 1-acyl-sn-glycero-2,3-cyclic phosphate + ethanolamine. Its function is as follows. Dermonecrotic toxins cleave the phosphodiester linkage between the phosphate and headgroup of certain phospholipids (sphingolipid and lysolipid substrates), forming an alcohol (often choline) and a cyclic phosphate. This toxin acts on sphingomyelin (SM). It may also act on ceramide phosphoethanolamine (CPE), lysophosphatidylcholine (LPC) and lysophosphatidylethanolamine (LPE), but not on lysophosphatidylserine (LPS), and lysophosphatidylglycerol (LPG). It acts by transphosphatidylation, releasing exclusively cyclic phosphate products as second products. In vivo, intradermal injection induces dermonecrosis. Induces hemolysis, increased vascular permeability, edema, inflammatory response, and platelet aggregation. The chain is Dermonecrotic toxin LlSicTox-alphaIII-1 from Loxosceles laeta (South American recluse spider).